We begin with the raw amino-acid sequence, 258 residues long: MGVERIKAAFENGKKAFIPYVMGGDGGLEILKERMRFLDEAGASIVEIGIPFSDPVADGPTIQRAGKRALDSGVTVKGIFQALIEVRKEVQIPFVLMTYLNPVLAFGKERFIERCLEAGVDGIIVPDLPYEEQDIIAPLLREANIALIPLVTVTSPIERIKKITSESEGFVYAVTVAGVTGVRQNFKDEIHSYLEKVKSHTHLPVVAGFGISTKEHVEEMVTICDGVVVGSKVIELLENEKREEICEFIQATKQKEEA.

Active-site proton acceptor residues include glutamate 47 and aspartate 58.

It belongs to the TrpA family. As to quaternary structure, tetramer of two alpha and two beta chains.

The catalysed reaction is (1S,2R)-1-C-(indol-3-yl)glycerol 3-phosphate + L-serine = D-glyceraldehyde 3-phosphate + L-tryptophan + H2O. It participates in amino-acid biosynthesis; L-tryptophan biosynthesis; L-tryptophan from chorismate: step 5/5. In terms of biological role, the alpha subunit is responsible for the aldol cleavage of indoleglycerol phosphate to indole and glyceraldehyde 3-phosphate. The polypeptide is Tryptophan synthase alpha chain (Bacillus cereus (strain AH820)).